Consider the following 435-residue polypeptide: Monodictyphenone cluster transcription factor (435 aa).

The segment at residues 23–50 (CHACALSKLKCSQDKPTCSRCVKRGTAC) is a DNA-binding region (zn(2)-C6 fungal-type). The segment at 117 to 147 (QYHQRTPSYPESIPSLLSSTGPGTSATSPLT) is disordered. Residues 130 to 147 (PSLLSSTGPGTSATSPLT) are compositionally biased toward low complexity.

The protein localises to the nucleus. Its function is as follows. Transcription factor that regulates the expression of the gene cluster that mediates the biosynthesis of monodictyphenone, a prenyl xanthone derivative. The polypeptide is Monodictyphenone cluster transcription factor (Emericella nidulans (strain FGSC A4 / ATCC 38163 / CBS 112.46 / NRRL 194 / M139) (Aspergillus nidulans)).